A 341-amino-acid chain; its full sequence is Phenylalanine--tRNA ligase alpha subunit (341 aa).

Glutamate 254 serves as a coordination point for Mg(2+).

Belongs to the class-II aminoacyl-tRNA synthetase family. Phe-tRNA synthetase alpha subunit type 1 subfamily. In terms of assembly, tetramer of two alpha and two beta subunits. The cofactor is Mg(2+).

The protein localises to the cytoplasm. It carries out the reaction tRNA(Phe) + L-phenylalanine + ATP = L-phenylalanyl-tRNA(Phe) + AMP + diphosphate + H(+). The sequence is that of Phenylalanine--tRNA ligase alpha subunit from Chlorobium phaeobacteroides (strain DSM 266 / SMG 266 / 2430).